The chain runs to 183 residues: Peptide deformylase (183 aa).

The Fe cation site is built by Cys-110 and His-153. Glu-154 is an active-site residue. Position 157 (His-157) interacts with Fe cation.

Belongs to the polypeptide deformylase family. Requires Fe(2+) as cofactor.

The enzyme catalyses N-terminal N-formyl-L-methionyl-[peptide] + H2O = N-terminal L-methionyl-[peptide] + formate. In terms of biological role, removes the formyl group from the N-terminal Met of newly synthesized proteins. Requires at least a dipeptide for an efficient rate of reaction. N-terminal L-methionine is a prerequisite for activity but the enzyme has broad specificity at other positions. This is Peptide deformylase from Oceanobacillus iheyensis (strain DSM 14371 / CIP 107618 / JCM 11309 / KCTC 3954 / HTE831).